A 1161-amino-acid chain; its full sequence is Integrin alpha-D (1161 aa).

Residues M1–G17 form the signal peptide. The Extracellular segment spans residues F18–N1099. FG-GAP repeat units lie at residues N19–P76 and I77–T136. N59 carries N-linked (GlcNAc...) asparagine glycosylation. A disulfide bond links C67 and C74. N-linked (GlcNAc...) asparagine glycans are attached at residues N87 and N99. C106 and C124 form a disulfide bridge. In terms of domain architecture, VWFA spans D150–I332. FG-GAP repeat units follow at residues Q339–I390, N391–W442, R443–W503, D506–S564, and Q569–V629. N-linked (GlcNAc...) asparagine glycosylation occurs at N391. D465, D467, D469, D473, D529, N531, D533, D537, D592, D596, and D600 together coordinate Ca(2+). C654 and C709 are joined by a disulfide. N-linked (GlcNAc...) asparagine glycosylation is found at N690 and N732. 2 cysteine pairs are disulfide-bonded: C768–C774 and C845–C860. N-linked (GlcNAc...) asparagine glycans are attached at residues N872 and N956. 2 cysteine pairs are disulfide-bonded: C993–C1017 and C1022–C1027. N-linked (GlcNAc...) asparagine glycosylation is present at N1045. Residues A1100 to A1120 traverse the membrane as a helical segment. Topologically, residues T1121–S1161 are cytoplasmic. The GFFKR motif motif lies at G1126 to R1130.

This sequence belongs to the integrin alpha chain family. As to quaternary structure, heterodimer of an alpha and a beta subunit. Alpha-D associates with beta-2. Expressed moderately on myelomonocytic cell lines and subsets of peripheral blood leukocytes and strongly on tissue-specialized cells, including macrophages foam cells within atherosclerotic plaques, and on splenic red pulp macrophages.

The protein localises to the membrane. Its function is as follows. Integrin alpha-D/beta-2 is a receptor for ICAM3 and VCAM1. May play a role in the atherosclerotic process such as clearing lipoproteins from plaques and in phagocytosis of blood-borne pathogens, particulate matter, and senescent erythrocytes from the blood. In Homo sapiens (Human), this protein is Integrin alpha-D (ITGAD).